The following is a 312-amino-acid chain: MALGNCTTPTTFILSGLTDNPRLQMPLFMVFLAIYTITLLANLGLIALISVDFHLQTPMYIFLQNLSFTDAAYSTVITPKMLATFLEERRTISYVGCILQYFSFVLLTSSECLLLAVMAYDRYVAICKPLLYPAIMTKAVCWRLVEGLYSLAFLNSLVHTSGLLKLSFCSSNVVNHFFCDNSPLFQISSSSTTLNELLVFIFGSWFAMSSIITTPISYVFIILTVVRIRSKDGKYKAFSTCTSHLMAVSLFHGTVIFMYLRPVKLFSLDTDKIASLFYTVVIPMLNPLIYSWRNKEVKDALRRVIATNVWIH.

Residues 1 to 26 (MALGNCTTPTTFILSGLTDNPRLQMP) lie on the Extracellular side of the membrane. N-linked (GlcNAc...) asparagine glycosylation is present at N5. Residues 27-49 (LFMVFLAIYTITLLANLGLIALI) form a helical membrane-spanning segment. The Cytoplasmic segment spans residues 50-57 (SVDFHLQT). Residues 58–79 (PMYIFLQNLSFTDAAYSTVITP) form a helical membrane-spanning segment. Topologically, residues 80-100 (KMLATFLEERRTISYVGCILQ) are extracellular. A disulfide bond links C97 and C179. Residues 101 to 120 (YFSFVLLTSSECLLLAVMAY) traverse the membrane as a helical segment. Over 121–139 (DRYVAICKPLLYPAIMTKA) the chain is Cytoplasmic. Residues 140–164 (VCWRLVEGLYSLAFLNSLVHTSGLL) traverse the membrane as a helical segment. At 165–205 (KLSFCSSNVVNHFFCDNSPLFQISSSSTTLNELLVFIFGSW) the chain is on the extracellular side. Residues 206–226 (FAMSSIITTPISYVFIILTVV) traverse the membrane as a helical segment. Residues 227–239 (RIRSKDGKYKAFS) are Cytoplasmic-facing. The chain crosses the membrane as a helical span at residues 240-260 (TCTSHLMAVSLFHGTVIFMYL). Topologically, residues 261–271 (RPVKLFSLDTD) are extracellular. Residues 272–292 (KIASLFYTVVIPMLNPLIYSW) form a helical membrane-spanning segment. The Cytoplasmic segment spans residues 293 to 312 (RNKEVKDALRRVIATNVWIH).

The protein belongs to the G-protein coupled receptor 1 family.

Its subcellular location is the cell membrane. Its function is as follows. Odorant receptor. This chain is Olfactory receptor-like protein COR5 (COR5), found in Gallus gallus (Chicken).